Here is a 393-residue protein sequence, read N- to C-terminus: Neuroplastin (393 aa).

The first 28 residues, 1–28 (MSGSSLPGALALSLLLVSGSLLPGPGAA), serve as a signal peptide directing secretion. Ig-like domains lie at 29–134 (QNAG…PSIT), 148–234 (PRIV…IEVK), and 237–327 (PDIT…ASVS). Topologically, residues 29-338 (QNAGFVKSPM…VLRVRSHLAP (310 aa)) are extracellular. A disulfide bond links C52 and C116. The segment at 149 to 161 (RIVTSEEVIIRDS) is narpin; mediates binding with FGFR1 and has antidepressant-like activity. C169 and C217 are joined by a disulfide. Residues N170, N196, N228, N283, N295, and N316 are each glycosylated (N-linked (GlcNAc...) asparagine). Residues C258 and C315 are joined by a disulfide bond. A helical membrane pass occupies residues 339–359 (LWPFLGILAEIIILVVIIVVY). Residues 360 to 393 (EKRKRPDEVPDAGPMKTNSTNNHKDKNLRQRNTN) lie on the Cytoplasmic side of the membrane. The tract at residues 366 to 393 (DEVPDAGPMKTNSTNNHKDKNLRQRNTN) is disordered.

In terms of assembly, interacts with ATP2B1; this interaction stabilizes ATP2B1 and increases ATPase activity; this interaction controls T cell calcium homeostasis following T cell activation. Interacts with XKR8; promoting its localization at the cell membrane. In terms of processing, isoform 1 and isoform 2 are N-glycosylated. In terms of tissue distribution, isoform 1 is ubiquitously expressed. Isoform 2 is brain-specific. In brain isoform 2 is highly expressed in hippocampus and cerebral cortex and weakly in cerebellum and lower brain regions. In the hippocampus isoform 2 is found in the dentate gyrus and CA1-CA4, the striatum oriens of CA3 shows the higher level.

The protein resides in the cell membrane. Its subcellular location is the postsynaptic density. Probable homophilic and heterophilic cell adhesion molecule involved in long term potentiation at hippocampal excitatory synapses through activation of p38MAPK. May also regulate neurite outgrowth by activating the FGFR1 signaling pathway. May play a role in synaptic plasticity. Also acts as a chaperone for ATP2B1; stabilizes ATP2B1 and increases its ATPase activity. Promotes localization of XKR8 at the cell membrane. In Rattus norvegicus (Rat), this protein is Neuroplastin (Nptn).